A 499-amino-acid chain; its full sequence is L-asparagine permease (499 aa).

The next 12 helical transmembrane spans lie at 34–54 (QVQM…GAGA), 58–78 (MAGP…FFIL), 109–129 (VAGW…ITAV), 146–166 (VFAL…VKWF), 171–191 (FWFA…GTVF), 219–239 (LLPA…IEMV), 264–284 (IGLF…WSAY), 298–318 (LGVP…ALSS), 353–373 (YAGI…NYLV), 378–398 (FEIV…FIIV), 422–442 (APFT…LMAF), and 448–468 (TYTI…WFGV).

It belongs to the amino acid-polyamine-organocation (APC) superfamily. Amino acid transporter (AAT) (TC 2.A.3.1) family.

It is found in the cell inner membrane. This Escherichia coli (strain K12) protein is L-asparagine permease (ansP).